The sequence spans 173 residues: Ribosome maturation factor RimM (173 aa).

A PRC barrel domain is found at 98 to 170; it reads EDEYYWCDLL…RMTVSLPEGL (73 aa).

The protein belongs to the RimM family. Binds ribosomal protein uS19.

It is found in the cytoplasm. In terms of biological role, an accessory protein needed during the final step in the assembly of 30S ribosomal subunit, possibly for assembly of the head region. Essential for efficient processing of 16S rRNA. May be needed both before and after RbfA during the maturation of 16S rRNA. It has affinity for free ribosomal 30S subunits but not for 70S ribosomes. This Geotalea uraniireducens (strain Rf4) (Geobacter uraniireducens) protein is Ribosome maturation factor RimM.